The sequence spans 72 residues: Exodeoxyribonuclease 7 small subunit (72 aa).

This sequence belongs to the XseB family. As to quaternary structure, heterooligomer composed of large and small subunits.

The protein resides in the cytoplasm. The catalysed reaction is Exonucleolytic cleavage in either 5'- to 3'- or 3'- to 5'-direction to yield nucleoside 5'-phosphates.. Its function is as follows. Bidirectionally degrades single-stranded DNA into large acid-insoluble oligonucleotides, which are then degraded further into small acid-soluble oligonucleotides. This is Exodeoxyribonuclease 7 small subunit from Clostridium kluyveri (strain NBRC 12016).